A 1749-amino-acid chain; its full sequence is Intraflagellar transport protein 172 homolog (1749 aa).

M1 bears the N-acetylmethionine mark. Residue K4 forms a Glycyl lysine isopeptide (Lys-Gly) (interchain with G-Cter in SUMO1) linkage. WD repeat units follow at residues 14–53, 64–103, 110–148, 150–191, 195–233, 238–278, 284–323, 483–520, and 521–559; these read DGAA…RDKF, RKSY…GDKK, IQTS…SSTI, GTES…ESQG, NHPC…QTFD, PQER…WEEA, ANLY…SIYK, SHES…CSKT, and MILN…ERVT. A TPR 1 repeat occupies 593 to 624; it reads DEGLIEFGTAIDDGNYTRATAFLETLEMTPET. The residue at position 672 (R672) is an Omega-N-methylarginine. TPR repeat units lie at residues 692–725, 809–842, 854–887, 912–945, 947–970, 971–1004, 1042–1075, 1142–1175, 1276–1309, 1345–1378, 1411–1445, 1447–1477, and 1574–1607; these read EKNY…EECI, GELY…MKAV, VRLE…IKAI, SKYY…KDAI, MYTQ…PEDV, SVLY…DLAI, EGRL…EEAY, PEIH…KEAV, VEGL…GSSG, IGKH…NKAK, GVDV…LHKY, ALYA…NPQN, and DKAF…TDAI.

Belongs to the IFT172 family. In terms of assembly, interacts with IFT88. Interacts with IFT57. Interacts with RABL2/RABL2A; binds preferentially to GDP-bound RABL2. As to expression, co-localizes with RABL2/RABL2A in the midpiece of elongated spermatids within the testis (at protein level). Expressed in the flagellum of elongated spermatids and sperm in the testis lumen (at protein level).

The protein resides in the cell projection. Its subcellular location is the cilium. Functionally, required for the maintenance and formation of cilia. Plays an indirect role in hedgehog (Hh) signaling, cilia being required for all activity of the hedgehog pathway. This is Intraflagellar transport protein 172 homolog (Ift172) from Mus musculus (Mouse).